The chain runs to 123 residues: Large ribosomal subunit protein bL19 (123 aa).

Belongs to the bacterial ribosomal protein bL19 family.

In terms of biological role, this protein is located at the 30S-50S ribosomal subunit interface and may play a role in the structure and function of the aminoacyl-tRNA binding site. The sequence is that of Large ribosomal subunit protein bL19 from Ruegeria sp. (strain TM1040) (Silicibacter sp.).